The primary structure comprises 381 residues: Meiotic recombination protein SPO11-1 (381 aa).

The Topo IIA-type catalytic domain occupies 23–162 (EEAATLLHRI…LNVVPVAKGL (140 aa)). Tyr-123 (O-(5'-phospho-DNA)-tyrosine intermediate) is an active-site residue. Mg(2+) is bound by residues Glu-209 and Asp-261.

This sequence belongs to the TOP6A family. Mg(2+) serves as cofactor. Highly expressed in flowers before pollination. Expressed in roots and shoots.

It localises to the nucleus. The catalysed reaction is ATP-dependent breakage, passage and rejoining of double-stranded DNA.. Its function is as follows. Required for meiotic recombination. Mediates DNA cleavage that forms the double-strand breaks (DSB) that initiate meiotic recombination. May be involved in plant growth and development, and stress tolerance. This is Meiotic recombination protein SPO11-1 (SPO11-1) from Oryza sativa subsp. indica (Rice).